The sequence spans 647 residues: DNA mismatch repair protein MutL (647 aa).

Positions 389–423 are disordered; it reads SESSVSSVANKQQPTVKQAKRSADDSDSEHGKLDY. Residues 409–423 are compositionally biased toward basic and acidic residues; that stretch reads RSADDSDSEHGKLDY.

It belongs to the DNA mismatch repair MutL/HexB family.

In terms of biological role, this protein is involved in the repair of mismatches in DNA. It is required for dam-dependent methyl-directed DNA mismatch repair. May act as a 'molecular matchmaker', a protein that promotes the formation of a stable complex between two or more DNA-binding proteins in an ATP-dependent manner without itself being part of a final effector complex. The protein is DNA mismatch repair protein MutL of Streptococcus thermophilus (strain ATCC BAA-491 / LMD-9).